Reading from the N-terminus, the 362-residue chain is UPF0324 membrane protein YPO1307/y2878/YP_1285 (362 aa).

Transmembrane regions (helical) follow at residues 21-38, 48-70, 102-124, 139-161, 168-190, 240-257, 278-300, 305-327, and 334-356; these read YIPG…ALNV, GLGA…YPWL, VADV…FILA, VMLI…EPVL, VAVA…PWLY, MIRV…SAYL, WFAV…AVWV, TLDT…IGSI, and PLLL…NLFV.

This sequence belongs to the UPF0324 family.

It is found in the cell membrane. The chain is UPF0324 membrane protein YPO1307/y2878/YP_1285 from Yersinia pestis.